The chain runs to 303 residues: Aspartate carbamoyltransferase catalytic subunit (303 aa).

Carbamoyl phosphate is bound by residues Arg-51 and Thr-52. Lys-80 serves as a coordination point for L-aspartate. The carbamoyl phosphate site is built by Arg-101, His-129, and Gln-132. Arg-162 and Arg-221 together coordinate L-aspartate. Carbamoyl phosphate is bound by residues Leu-260 and Pro-261.

This sequence belongs to the aspartate/ornithine carbamoyltransferase superfamily. ATCase family. Heterooligomer of catalytic and regulatory chains.

The enzyme catalyses carbamoyl phosphate + L-aspartate = N-carbamoyl-L-aspartate + phosphate + H(+). It functions in the pathway pyrimidine metabolism; UMP biosynthesis via de novo pathway; (S)-dihydroorotate from bicarbonate: step 2/3. Its function is as follows. Catalyzes the condensation of carbamoyl phosphate and aspartate to form carbamoyl aspartate and inorganic phosphate, the committed step in the de novo pyrimidine nucleotide biosynthesis pathway. This Saccharolobus islandicus (strain M.14.25 / Kamchatka #1) (Sulfolobus islandicus) protein is Aspartate carbamoyltransferase catalytic subunit.